A 1429-amino-acid chain; its full sequence is Protein lin-12 (1429 aa).

The signal sequence occupies residues 1–15; that stretch reads MRIPTICFLFLLISL. The Extracellular portion of the chain corresponds to 16 to 908; the sequence is SKSLHIGSCL…GNNTGFLSWN (893 aa). 2 EGF-like domains span residues 20 to 61 and 114 to 150; these read HIGS…EYCE and TQGW…ERCE. Disulfide bonds link Cys24–Cys35, Cys29–Cys49, Cys51–Cys60, Cys118–Cys129, Cys123–Cys138, Cys140–Cys149, Cys156–Cys169, Cys163–Cys178, and Cys180–Cys189. N-linked (GlcNAc...) asparagine glycosylation is present at Asn41. An EGF-like 3; calcium-binding domain is found at 152-190; it reads DVNECEENKNACGNRSTCMNTLGTYICVCPQGFLPPDCL. An N-linked (GlcNAc...) asparagine glycan is attached at Asn165. An N-linked (GlcNAc...) asparagine glycan is attached at Asn194. EGF-like domains follow at residues 201–246, 250–285, 287–323, and 323–363; these read KQPV…STCE, KEDS…SYCQ, GKDN…PYCE, and EKMD…ILCE. Cystine bridges form between Cys205-Cys227, Cys221-Cys234, Cys236-Cys245, Cys254-Cys264, Cys259-Cys273, Cys275-Cys284, Cys291-Cys302, Cys296-Cys311, Cys313-Cys322, Cys327-Cys339, Cys334-Cys351, Cys353-Cys362, Cys369-Cys381, Cys375-Cys390, Cys392-Cys401, Cys408-Cys419, Cys413-Cys429, Cys431-Cys440, Cys462-Cys475, Cys469-Cys480, Cys482-Cys491, Cys507-Cys518, Cys512-Cys529, Cys531-Cys540, Cys547-Cys558, Cys552-Cys567, Cys569-Cys578, Cys586-Cys597, Cys591-Cys607, and Cys609-Cys618. Residues 365 to 402 enclose the EGF-like 8; calcium-binding domain; sequence DKNECLSENMCLNNGTCVNLPGSFRCDCARGFGGKWCD. Asn378 is a glycosylation site (N-linked (GlcNAc...) asparagine). 5 consecutive EGF-like domains span residues 404 to 441, 449 to 492, 503 to 541, 543 to 579, and 582 to 619; these read PLNM…KRCE, GGVR…NQCE, SENL…DICE, HKDL…NGCE, and KMFR…ARCE. Asn515 carries N-linked (GlcNAc...) asparagine glycosylation. Asn623 is a glycosylation site (N-linked (GlcNAc...) asparagine). Intrachain disulfides connect Cys638-Cys661, Cys643-Cys656, Cys652-Cys668, Cys678-Cys702, Cys684-Cys697, Cys693-Cys709, Cys716-Cys742, Cys724-Cys737, and Cys733-Cys749. LNR repeat units follow at residues 638–674, 678–709, and 716–754; these read CEKR…KREP, CRYG…GMDC, and CPVK…NETN. Residues Asn751, Asn754, and Asn900 are each glycosylated (N-linked (GlcNAc...) asparagine). A helical membrane pass occupies residues 909–931; sequence ALLLIGAGCLIVMVVLMLGALPG. Over 932-1429 the chain is Cytoplasmic; that stretch reads NRTRKRRMIN…TRYSEPAHYF (498 aa). Residues 933 to 952 form an RAM domain region; the sequence is RTRKRRMINASVWMPPMENE. ANK repeat units lie at residues 1093–1122, 1126–1158, 1162–1194, 1206–1236, and 1240–1269; these read DENT…DPTI, SERS…DIEE, NGMT…KVDY, KGRT…NKDK, and DGKT…SVEA. The segment at 1308 to 1374 is disordered; that stretch reads IQHTHQPQPS…TTHTTPTSLN (67 aa). Positions 1319 to 1330 are enriched in basic residues; sequence KVTRAPKKQTSR. Over residues 1361 to 1374 the composition is skewed to polar residues; that stretch reads HFMNTTHTTPTSLN.

Belongs to the NOTCH family. In terms of assembly, may interact with dsl-1. May interact with lag-2. May interact with osm-11. Interacts with sel-10. When activated, the lin-12/Notch intracellular domain (NICD) can become a component of a complex consisting of at least the NICD, lag-1 and sel-8/lag-3. The NICD probably facilitates ordered assembly of the ternary complex via allosteric interactions of its RBP-j associated molecule (RAM) domain with lag-1. Upon binding its ligands, it is cleaved (S2 cleavage) in its extracellular domain, close to the transmembrane domain. S2 cleavage is probably mediated by the metalloproteases adm-4 and sup-17. It is then cleaved (S3 cleavage) downstream of its transmembrane domain, releasing it from the cell membrane; S3 cleavage requires a multiprotein gamma-secretase complex, which may include presenilin sel-12.

The protein resides in the apical cell membrane. It is found in the nucleus. Functionally, essential signaling protein which has a major role in many developmental processes; involved in cell fate decisions that require cell-cell interactions. Probable membrane-bound receptor for putative ligands lag-2, apx-1, dsl-1 and osm-11. Upon ligand activation, and releasing from the cell membrane, the lin-12/Notch intracellular domain (NICD) forms a transcriptional activator complex with lag-1 and lag-3 and regulates expression of various genes. Required for ventral cell fates in the postembryonic mesodermal lineage (M lineage) and in uterine precursor cells. Activity in cell fate decisions and tumorigenesis is negatively regulated by sel-10. Best known for involvement in cell-fate decisions during development, but also plays roles in other events. Regulates recovery from the dauer larval state. Modulates chemosensory avoidance of octanol and quiescence during molting. Promotes basement membrane mobility during tissue remodeling. Involved in establishing left-right asymmetry during intestinal organogenesis. This is Protein lin-12 from Caenorhabditis elegans.